The chain runs to 233 residues: MRVTALVPAAGMGKRMGADINKQYLLLEGKPILAHTLAVFELAPFVDDIYVITPEAEIPYCREHVVEQFGFTKVRGVVAGGKERQNSVLNGLRAIDASDEDDVVLIHDGVRPFIPTAVLKRSVEVATAEDGALVAVPAKDTIKTVEAGIVTGTPPRENIWLAQTPQTFRYGIIRAAHELAAAEGFLGTDDASLVERLGRQVHVVMGDYRNIKITTPEDMLLAEAFLKSVNSER.

It belongs to the IspD/TarI cytidylyltransferase family. IspD subfamily.

The catalysed reaction is 2-C-methyl-D-erythritol 4-phosphate + CTP + H(+) = 4-CDP-2-C-methyl-D-erythritol + diphosphate. It participates in isoprenoid biosynthesis; isopentenyl diphosphate biosynthesis via DXP pathway; isopentenyl diphosphate from 1-deoxy-D-xylulose 5-phosphate: step 2/6. Functionally, catalyzes the formation of 4-diphosphocytidyl-2-C-methyl-D-erythritol from CTP and 2-C-methyl-D-erythritol 4-phosphate (MEP). The protein is 2-C-methyl-D-erythritol 4-phosphate cytidylyltransferase of Geotalea uraniireducens (strain Rf4) (Geobacter uraniireducens).